We begin with the raw amino-acid sequence, 311 residues long: Homeobox-leucine zipper protein HOX13 (311 aa).

Positions 1 to 74 (MKRPTSSSRK…PSCGLGEKKR (74 aa)) are disordered. Positions 35-54 (DEAEMEEVDEEEEEEVDEDM) are enriched in acidic residues. The segment at residues 69–128 (LGEKKRRLALEQVRALERSFDTDNKLDPDRKARIARDLGLQPRQVAVWFQNRRARWKTKQ) is a DNA-binding region (homeobox). The segment at 127–171 (KQLERDFAALRARHDALRADCDALRRDKDALAAEIRELREKLPTK) is leucine-zipper.

The protein belongs to the HD-ZIP homeobox family. Class I subfamily. In terms of tissue distribution, expressed in seedlings, roots, stems, leaf sheaths and blades and panicles.

The protein resides in the nucleus. In terms of biological role, probable transcription factor. The sequence is that of Homeobox-leucine zipper protein HOX13 (HOX13) from Oryza sativa subsp. japonica (Rice).